A 622-amino-acid polypeptide reads, in one-letter code: Palmitoyltransferase ZDHHC13 (622 aa).

An N-acetylmethionine modification is found at methionine 1. Over 1–291 (MEGPGLGSQC…RLWRWLHKCE (291 aa)) the chain is Cytoplasmic. 7 ANK repeats span residues 43–78 (PLIEDSSNCDIVKATQYGIFERCKELVEAGYDVRQP), 81–110 (ENVSLLHWAAINNRLELVKFYISKGAVIDQ), 115–144 (LNSTPLHWAIRQGHLPMVILLLQHGADPTL), 148–177 (EGFSSIHLAVLFQHMPIIAYLISKGQSVNM), 181–211 (NGQTPLMLSAYKVIGPEPTGFLLKFNPSLSV), 216–245 (HQNTPLHWAVAAGNVSAVDKLLEAGSSLDI), and 249–277 (KGETPLDMALQSKNQLISHMLRTEAKMRA). The helical transmembrane segment at 292 to 312 (LFLLLILSMITLWAVGYILDF) threads the bilayer. At 313–320 (NSDSWLLK) the chain is on the lumenal side. A helical membrane pass occupies residues 321–341 (GCLLVALFFLTSLFPRFLVGY). Residues 342 to 347 (KNLVYL) lie on the Cytoplasmic side of the membrane. The chain crosses the membrane as a helical span at residues 348–368 (PTVFLLSSIFWIFMTWFILFF). Residues 369-371 (PDT) lie on the Lumenal side of the membrane. The helical transmembrane segment at 372 to 392 (AGSPLYFAFIFSIMAFLYFFY) threads the bilayer. The Cytoplasmic segment spans residues 393–470 (KTWATDPGFT…RCIGFGNHHH (78 aa)). Residues 426–476 (TFCTSCLIRKPLRSLHCHVCNSCVARFDQHCFWTGRCIGFGNHHHYIFFLL) form the DHHC domain. The S-palmitoyl cysteine intermediate role is filled by cysteine 456. Residues 471–491 (YIFFLLSLSMVCDWIIYGSFV) form a helical membrane-spanning segment. At 492–518 (YWSNHCATTFKEDGLWTYLNQIVACSP) the chain is on the lumenal side. A helical transmembrane segment spans residues 519 to 539 (WVLYIFMLAAFHFSWSTFLLI). Topologically, residues 540–622 (NQLFQIAFLG…PAKEKVLRSV (83 aa)) are cytoplasmic.

It belongs to the DHHC palmitoyltransferase family. AKR/ZDHHC17 subfamily. Interacts (via ANK repeats) with CLIP3. Interacts (via ANK repeats) with DNAJC5 (via C-terminus). Interacts (via ANK repeats) with HTT. Interacts (via ANK repeats) with MAP6. Interacts (via ANK repeats) with SNAP23. Interacts (via ANK repeats) with SNAP25. May interact (via ANK repeats) with SPRED2. Expressed in most adult tissues, but at low levels in the liver, skin, and lung.

Its subcellular location is the golgi apparatus membrane. The protein resides in the cytoplasmic vesicle membrane. The catalysed reaction is L-cysteinyl-[protein] + hexadecanoyl-CoA = S-hexadecanoyl-L-cysteinyl-[protein] + CoA. In terms of biological role, palmitoyltransferase that could catalyze the addition of palmitate onto various protein substrates. Palmitoyltransferase for HTT and GAD2. May play a role in Mg(2+) transport. The polypeptide is Palmitoyltransferase ZDHHC13 (Mus musculus (Mouse)).